Here is a 623-residue protein sequence, read N- to C-terminus: Dictomallein-5 (623 aa).

Positions 1-21 are cleaved as a signal peptide; sequence MKIFIIKIILVLFNYVLLSYS. The region spanning 174–435 is the Peptidase M66 domain; that stretch reads PNVGQDYTLK…QNYFKNSIYY (262 aa). Residue His327 coordinates Zn(2+). The active site involves Glu328. Zn(2+) contacts are provided by His331 and His337.

It belongs to the dictomallein family. The cofactor is Zn(2+).

The protein localises to the secreted. This is Dictomallein-5 (dtmlE) from Dictyostelium discoideum (Social amoeba).